A 144-amino-acid polypeptide reads, in one-letter code: Large ribosomal subunit protein uL16 (144 aa).

Residues 1–19 (MLLPKRVKYRRQHRPKTTG) are compositionally biased toward basic residues. Residues 1–23 (MLLPKRVKYRRQHRPKTTGRSKG) form a disordered region.

Belongs to the universal ribosomal protein uL16 family. As to quaternary structure, part of the 50S ribosomal subunit.

Its function is as follows. Binds 23S rRNA and is also seen to make contacts with the A and possibly P site tRNAs. The sequence is that of Large ribosomal subunit protein uL16 from Staphylococcus aureus (strain Mu50 / ATCC 700699).